Consider the following 429-residue polypeptide: Methylenetetrahydrofolate--tRNA-(uracil-5-)-methyltransferase TrmFO (429 aa).

7-12 contributes to the FAD binding site; it reads GAGLAG.

Belongs to the MnmG family. TrmFO subfamily. Requires FAD as cofactor.

The protein localises to the cytoplasm. The enzyme catalyses uridine(54) in tRNA + (6R)-5,10-methylene-5,6,7,8-tetrahydrofolate + NADH + H(+) = 5-methyluridine(54) in tRNA + (6S)-5,6,7,8-tetrahydrofolate + NAD(+). The catalysed reaction is uridine(54) in tRNA + (6R)-5,10-methylene-5,6,7,8-tetrahydrofolate + NADPH + H(+) = 5-methyluridine(54) in tRNA + (6S)-5,6,7,8-tetrahydrofolate + NADP(+). Catalyzes the folate-dependent formation of 5-methyl-uridine at position 54 (M-5-U54) in all tRNAs. The protein is Methylenetetrahydrofolate--tRNA-(uracil-5-)-methyltransferase TrmFO of Thermosipho melanesiensis (strain DSM 12029 / CIP 104789 / BI429).